A 144-amino-acid chain; its full sequence is 3-hydroxyacyl-[acyl-carrier-protein] dehydratase FabZ (144 aa).

Residue histidine 48 is part of the active site.

The protein belongs to the thioester dehydratase family. FabZ subfamily.

The protein resides in the cytoplasm. It catalyses the reaction a (3R)-hydroxyacyl-[ACP] = a (2E)-enoyl-[ACP] + H2O. Functionally, involved in unsaturated fatty acids biosynthesis. Catalyzes the dehydration of short chain beta-hydroxyacyl-ACPs and long chain saturated and unsaturated beta-hydroxyacyl-ACPs. This chain is 3-hydroxyacyl-[acyl-carrier-protein] dehydratase FabZ, found in Bacillus cytotoxicus (strain DSM 22905 / CIP 110041 / 391-98 / NVH 391-98).